Here is a 382-residue protein sequence, read N- to C-terminus: S-adenosylmethionine decarboxylase proenzyme (382 aa).

A substrate-binding site is contributed by phenylalanine 32. Catalysis depends on residues glutamate 33 and glutamate 36. Substrate is bound at residue leucine 87. Serine 90 functions as the Schiff-base intermediate with substrate; via pyruvic acid in the catalytic mechanism. The residue at position 90 (serine 90) is a Pyruvic acid (Ser); by autocatalysis. Residue cysteine 104 is the Proton donor; for catalytic activity of the active site. Phenylalanine 248 contributes to the substrate binding site. Active-site proton acceptor; for processing activity residues include serine 254 and histidine 267. Glutamate 271 serves as a coordination point for substrate.

It belongs to the eukaryotic AdoMetDC family. As to quaternary structure, heterotetramer of two alpha and two beta chains. Requires pyruvate as cofactor. In terms of processing, is synthesized initially as an inactive proenzyme. Formation of the active enzyme involves a self-maturation process in which the active site pyruvoyl group is generated from an internal serine residue via an autocatalytic post-translational modification. Two non-identical subunits are generated from the proenzyme in this reaction, and the pyruvate is formed at the N-terminus of the alpha chain, which is derived from the carboxyl end of the proenzyme. The post-translation cleavage follows an unusual pathway, termed non-hydrolytic serinolysis, in which the side chain hydroxyl group of the serine supplies its oxygen atom to form the C-terminus of the beta chain, while the remainder of the serine residue undergoes an oxidative deamination to produce ammonia and the pyruvoyl group blocking the N-terminus of the alpha chain.

It catalyses the reaction S-adenosyl-L-methionine + H(+) = S-adenosyl 3-(methylsulfanyl)propylamine + CO2. Its pathway is amine and polyamine biosynthesis; S-adenosylmethioninamine biosynthesis; S-adenosylmethioninamine from S-adenosyl-L-methionine: step 1/1. This is S-adenosylmethionine decarboxylase proenzyme from Leishmania donovani.